The following is a 98-amino-acid chain: MSYFRWDGEDLILDCHLQPKASKDEFAGLHGERLKIRLTAPPVEGKANAHLLAFLAKAFGVAKAQVSLESGELNRHKRLRIHAPQRLPTLPGLIFPGK.

It belongs to the UPF0235 family.

The protein is UPF0235 protein Pmen_4153 of Ectopseudomonas mendocina (strain ymp) (Pseudomonas mendocina).